Here is a 174-residue protein sequence, read N- to C-terminus: Mating-type protein ALPHA2 (174 aa).

Positions 108–170 (QPYRGHRFTK…NRRRKQKHPP (63 aa)) form a DNA-binding region, homeobox; TALE-type.

It belongs to the TALE/M-ATYP homeobox family. As to quaternary structure, forms a heterodimer with A1.

It localises to the nucleus. Mating type proteins are sequence specific DNA-binding proteins that act as master switches in yeast differentiation by controlling gene expression in a cell type-specific fashion. Transcriptional corepressor that acts in conjunction with A1 to repress transcription of haploid-specific genes and of MATALPHA1. This chain is Mating-type protein ALPHA2 (MATALPHA2), found in Nakaseomyces delphensis (Yeast).